Reading from the N-terminus, the 3462-residue chain is Extracellular matrix-binding protein EbhA (3462 aa).

A compositionally biased stretch (polar residues) spans 1-19; it reads MVQQSTTVAEAQGNEQKAN. The segment at 1–21 is disordered; it reads MVQQSTTVAEAQGNEQKANNV. FIVAR domains lie at 24–82, 150–208, 276–334, 402–460, 528–586, 654–712, 780–838, 906–964, 1032–1093, 1158–1216, 1284–1342, 1410–1467, 1535–1593, 1661–1719, 1787–1845, 1913–1971, 2039–2093, 2161–2220, and 2415–2471; these read AMDK…INQA, AMGN…VEQA, AMTQ…ITAA, AMTQ…IQQA, AMTN…VEQA, AMTQ…VAQA, AMGT…VTQA, AMSN…ITRA, AMDQ…ITNE, AMEL…VNGA, AMHG…INQA, LMDA…VSSA, AMEA…VEQL, AMQA…VEQL, AMET…VDQV, SMDQ…VDQA, AMDQ…VIKL, and AMET…INGA. Residues 3267–3289 traverse the membrane as a helical segment; it reads VIKNAIGVVGISGLLASFWFFIA. The interval 3365–3462 is disordered; the sequence is RRKEDEEDVE…KKKKAKKNKK (98 aa). Basic and acidic residues-rich tracts occupy residues 3380-3390 and 3429-3439; these read TDEKVLKDNEH and QKDNQSKDKKS. Residues 3444 to 3462 are compositionally biased toward basic residues; it reads TSKKVAAKKKKKKAKKNKK.

Its subcellular location is the cell membrane. This is Extracellular matrix-binding protein EbhA (ebhA) from Staphylococcus aureus (strain Newman).